Consider the following 659-residue polypeptide: Homeobox protein slou (659 aa).

Over residues 1 to 21 (MVMLQSPAQKASDSASAQNTA) the composition is skewed to polar residues. Disordered regions lie at residues 1 to 63 (MVML…PAAK), 94 to 152 (MSSE…SFSS), 198 to 298 (AQQH…AAPS), 316 to 349 (TQAS…PSGR), 376 to 440 (QIAA…DRDA), and 455 to 548 (PNKF…PRRA). Low complexity-rich tracts occupy residues 27–51 (SPNS…SVVS), 95–108 (SSES…LSPL), and 120–135 (HNNN…NSNT). The span at 136 to 152 (RRSQSPPASVGSVSFSS) shows a compositional bias: polar residues. A compositionally biased stretch (basic residues) spans 201–232 (HMHHHQHQHHQHPAHPHSHQHPHPHPHPHPHP). 7 repeat units span residues 221-222 (HP), 223-224 (HP), 225-226 (HP), 227-228 (HP), 229-230 (HP), 231-232 (HP), and 233-234 (HP). A 7 X 2 AA tandem repeats of H-P region spans residues 221–234 (HPHPHPHPHPHPHP). 2 stretches are compositionally biased toward pro residues: residues 250-263 (PPSP…PPTS) and 275-286 (PIAPPQNPPHSS). 2 stretches are compositionally biased toward low complexity: residues 287 to 298 (QPPQQQQVAAPS) and 316 to 347 (TQAS…GSPS). A compositionally biased stretch (acidic residues) spans 388–401 (SEELNVDGNDEDSN). A compositionally biased stretch (low complexity) spans 417–435 (RSVNSSAAANPSSASTSAS). 2 stretches are compositionally biased toward acidic residues: residues 478–492 (RDEE…DQSE) and 500–519 (NDMD…DPSS). Positions 528-543 (SRNGDGKSGGGGGGGS) are enriched in gly residues. The homeobox DNA-binding region spans 545 to 604 (PRRARTAFTYEQLVSLENKFKTTRYLSVCERLNLALSLSLTETQVKIWFQNRRTKWKKQN).

Belongs to the NK-1 homeobox family. As to expression, mesodermal precursor cells of distinct muscles during embryogenesis, a subset of neuronal cells of the CNS and their precursors and also in cells of a small region of the midgut.

It localises to the nucleus. May play a role in specifying the identity of particular somatic muscles and neurons of the CNS. This chain is Homeobox protein slou (slou), found in Drosophila melanogaster (Fruit fly).